The sequence spans 230 residues: Sodium channel modifier 1 (230 aa).

Phosphoserine is present on Ser-2. Residues Lys-4–Arg-20 carry the Bipartite nuclear localization signal motif. Residues Phe-42–Leu-74 form a Matrin-type zinc finger. Lys-67 participates in a covalent cross-link: Glycyl lysine isopeptide (Lys-Gly) (interchain with G-Cter in SUMO2). 3 disordered regions span residues Tyr-76–Leu-106, Arg-129–Arg-186, and Gly-200–Asp-230. The segment covering Pro-81–Ala-102 has biased composition (basic and acidic residues). Ser-144 is subject to Phosphoserine. The segment covering Pro-164–Ala-174 has biased composition (low complexity). Phosphoserine is present on Ser-183. Residues Arg-188–Asp-230 are required for interaction with LUC7L2. The segment covering Gly-205 to Asn-214 has biased composition (basic and acidic residues). Acidic residues predominate over residues Val-215 to Asp-230. Ser-219 is modified (phosphoserine).

Component of the minor spliceosome, which splices U12-type introns. Within this complex, interacts with RNF113A, as well as with SF3B1/SF3b155, SF3B2/SF3b145, SF3B3/SF3b130 and CDC5L. May interact with LUC7L2 and SNRNP70.

It is found in the nucleus. It localises to the nucleoplasm. Its subcellular location is the nucleus speckle. In terms of biological role, as a component of the minor spliceosome, involved in the splicing of U12-type introns in pre-mRNAs. Plays a role in the regulation of primary cilia length and Hedgehog signaling. In Homo sapiens (Human), this protein is Sodium channel modifier 1 (SCNM1).